We begin with the raw amino-acid sequence, 128 residues long: Small ribosomal subunit protein bS6 (128 aa).

This sequence belongs to the bacterial ribosomal protein bS6 family.

Its function is as follows. Binds together with bS18 to 16S ribosomal RNA. The chain is Small ribosomal subunit protein bS6 from Leifsonia xyli subsp. xyli (strain CTCB07).